Reading from the N-terminus, the 96-residue chain is Large ribosomal subunit protein bL27 (96 aa).

Positions 1–9 (MLRLDLQFF) are excised as a propeptide.

Belongs to the bacterial ribosomal protein bL27 family. The N-terminus is cleaved by ribosomal processing cysteine protease Prp.

The chain is Large ribosomal subunit protein bL27 from Geobacillus sp. (strain WCH70).